Here is a 323-residue protein sequence, read N- to C-terminus: Cobalamin biosynthesis protein CobD (323 aa).

5 helical membrane passes run 52-72 (IAGVLLLALTVTSAASVTWLM), 73-93 (VWGSARLHALAGLMVAALLSS), 154-174 (DGIIAPLFWLALGGPVAGMAF), 214-234 (ALLMVMVAPLIGLSQANAASI), and 294-314 (IRLMYATTLAMAVISLATAAL).

It belongs to the CobD/CbiB family.

It is found in the cell membrane. The protein operates within cofactor biosynthesis; adenosylcobalamin biosynthesis. Functionally, converts cobyric acid to cobinamide by the addition of aminopropanol on the F carboxylic group. The polypeptide is Cobalamin biosynthesis protein CobD (Pelobacter propionicus (strain DSM 2379 / NBRC 103807 / OttBd1)).